The primary structure comprises 496 residues: Probable zinc metalloprotease SNOG_06590 (496 aa).

The signal sequence occupies residues 1–20; the sequence is MRSSMFFAVCAAAALQTALS. N-linked (GlcNAc...) asparagine glycosylation occurs at Asn-138. Zn(2+) is bound by residues His-161, Asp-181, and Glu-226. Asn-241 carries N-linked (GlcNAc...) asparagine glycosylation. Asp-253 is a binding site for Zn(2+). Asn-282, Asn-361, Asn-409, Asn-415, and Asn-457 each carry an N-linked (GlcNAc...) asparagine glycan. The Fibronectin type-III domain occupies 402–496; sequence EPMNVGINTT…PFPFGCTRNC (95 aa).

It belongs to the peptidase M28 family. M28B subfamily. It depends on Zn(2+) as a cofactor.

It is found in the secreted. The protein is Probable zinc metalloprotease SNOG_06590 of Phaeosphaeria nodorum (strain SN15 / ATCC MYA-4574 / FGSC 10173) (Glume blotch fungus).